The following is a 110-amino-acid chain: Small ribosomal subunit protein bS16 (110 aa).

The disordered stretch occupies residues 87–110; that stretch reads ARQNPIKAVPRKERKAQAEAAAKG.

Belongs to the bacterial ribosomal protein bS16 family.

The sequence is that of Small ribosomal subunit protein bS16 from Bradyrhizobium sp. (strain BTAi1 / ATCC BAA-1182).